Here is a 694-residue protein sequence, read N- to C-terminus: Polyphosphate kinase (694 aa).

Asparagine 45 provides a ligand contact to ATP. Mg(2+) contacts are provided by arginine 367 and arginine 397. Histidine 427 serves as the catalytic Phosphohistidine intermediate. ATP is bound by residues tyrosine 460, arginine 553, and histidine 580.

This sequence belongs to the polyphosphate kinase 1 (PPK1) family. Requires Mg(2+) as cofactor. An intermediate of this reaction is the autophosphorylated ppk in which a phosphate is covalently linked to a histidine residue through a N-P bond.

The catalysed reaction is [phosphate](n) + ATP = [phosphate](n+1) + ADP. Catalyzes the reversible transfer of the terminal phosphate of ATP to form a long-chain polyphosphate (polyP). In Campylobacter jejuni (strain RM1221), this protein is Polyphosphate kinase.